The sequence spans 804 residues: Leucine--tRNA ligase (804 aa).

The 'HIGH' region motif lies at 40 to 51; sequence PYPSGAGLHVGH. Positions 576–580 match the 'KMSKS' region motif; the sequence is KMSKS. K579 is a binding site for ATP.

It belongs to the class-I aminoacyl-tRNA synthetase family.

It localises to the cytoplasm. The catalysed reaction is tRNA(Leu) + L-leucine + ATP = L-leucyl-tRNA(Leu) + AMP + diphosphate. This is Leucine--tRNA ligase from Staphylococcus aureus (strain bovine RF122 / ET3-1).